The sequence spans 321 residues: Flagellin C (321 aa).

It belongs to the bacterial flagellin family.

The protein localises to the secreted. Its subcellular location is the bacterial flagellum. Functionally, flagellin is the subunit protein which polymerizes to form the filaments of bacterial flagella. The sequence is that of Flagellin C (flaC) from Rhizobium meliloti (strain 1021) (Ensifer meliloti).